A 241-amino-acid chain; its full sequence is Attacin-C (241 aa).

Residues 1–21 (MSKIVLLIVVIVGVLGSLAVA) form the signal peptide. The propeptide occupies 22 to 23 (LP). Gln-24 carries the pyrrolidone carboxylic acid modification. Residue Thr-39 is glycosylated (O-linked (GalNAc...) threonine). Ser-127 is modified (phosphoserine).

It belongs to the attacin/sarcotoxin-2 family. Hemolymph (at protein level).

The protein localises to the secreted. Its function is as follows. Has antimicrobial activity in synergy with other peptides. Strongest activity observed against E.cloacae. The polypeptide is Attacin-C (Drosophila melanogaster (Fruit fly)).